Here is a 371-residue protein sequence, read N- to C-terminus: 4-hydroxyprotoasukamycin monooxygenase (371 aa).

The protein belongs to the bacterial luciferase oxidoreductase family. It depends on FMN as a cofactor.

The enzyme catalyses 4-hydroxyprotoasukamycin + NADH + O2 + H(+) = asukamycin + NAD(+) + H2O. It participates in antibiotic biosynthesis. Its function is as follows. Involved in the biosynthesis of the antibiotic asukamycin. Catalyzes the epoxidation of 4-hydroxyprotoasukamycin to the final product, asukamycin. Can also convert some 4-hydroxyprotoasukamycin derivatives to their asukamycin derivatives, but cannot use protoasukamycin as substrate. Can also use NADPH, but catalytic efficiency is 20-fold higher with NADH. This chain is 4-hydroxyprotoasukamycin monooxygenase, found in Streptomyces nodosus subsp. asukaensis.